Reading from the N-terminus, the 185-residue chain is ATP-dependent protease subunit HslV (185 aa).

Residue Thr-12 is part of the active site. Positions 168, 171, and 174 each coordinate Na(+).

It belongs to the peptidase T1B family. HslV subfamily. In terms of assembly, a double ring-shaped homohexamer of HslV is capped on each side by a ring-shaped HslU homohexamer. The assembly of the HslU/HslV complex is dependent on binding of ATP.

Its subcellular location is the cytoplasm. The enzyme catalyses ATP-dependent cleavage of peptide bonds with broad specificity.. Allosterically activated by HslU binding. Protease subunit of a proteasome-like degradation complex believed to be a general protein degrading machinery. This Cereibacter sphaeroides (strain ATCC 17029 / ATH 2.4.9) (Rhodobacter sphaeroides) protein is ATP-dependent protease subunit HslV.